A 169-amino-acid polypeptide reads, in one-letter code: Centrosomal protein 20 (169 aa).

The tract at residues 1–104 (MATVGDLKAV…VVEDLNSQSV (104 aa)) is necessary and sufficient for homooligomerization and localization to centrosomes and pericentriolar satellites. The 33-residue stretch at 49-81 (ENLLINELIREYLAFNKYSYTSSVLTAETGLSE) folds into the LisH domain. Residues 135–169 (TFRNIPRGRNTKDTHSGPVQLTQTSTEDWHQRRHR) are disordered. Residues 151 to 160 (GPVQLTQTST) are compositionally biased toward polar residues.

Belongs to the CEP43 family. As to quaternary structure, homooligomer; probably required for localization to centrosomes.

It localises to the cell projection. The protein localises to the cilium. The protein resides in the cytoplasm. Its subcellular location is the cytoskeleton. It is found in the cilium basal body. It localises to the microtubule organizing center. The protein localises to the centrosome. The protein resides in the cytoplasmic granule. Its subcellular location is the centriolar satellite. Involved in the biogenesis of cilia. Required for the recruitment of PLK1 to centrosomes and S phase progression. The sequence is that of Centrosomal protein 20 (Cep20) from Xenopus laevis (African clawed frog).